The sequence spans 107 residues: MAQKIKKGDTVQVISGKDKGKRGEVIQVLPKEEKLIVRGVNIVKRHQRPTGQMRQGGIIEKEAPLYWSKVMLVCPSCDKATRVGFRVLEDGSKVRYCKKCGEIIDKK.

This sequence belongs to the universal ribosomal protein uL24 family. In terms of assembly, part of the 50S ribosomal subunit.

In terms of biological role, one of two assembly initiator proteins, it binds directly to the 5'-end of the 23S rRNA, where it nucleates assembly of the 50S subunit. Its function is as follows. One of the proteins that surrounds the polypeptide exit tunnel on the outside of the subunit. This chain is Large ribosomal subunit protein uL24, found in Fervidobacterium nodosum (strain ATCC 35602 / DSM 5306 / Rt17-B1).